A 473-amino-acid polypeptide reads, in one-letter code: C3a anaphylatoxin chemotactic receptor (473 aa).

At 1–23 the chain is on the extracellular side; that stretch reads MESFTADTNSTDLHSRPLFKPQD. N9 is a glycosylation site (N-linked (GlcNAc...) asparagine). The chain crosses the membrane as a helical span at residues 24–46; that stretch reads IASMVILSLTCLLGLPGNGLVLW. Residues 47–57 lie on the Cytoplasmic side of the membrane; the sequence is VAGVKMKRTVN. Residues 58-80 form a helical membrane-spanning segment; that stretch reads TVWFLHLTLADFLCCLSLPFSVA. Over 81-96 the chain is Extracellular; sequence HLILRGHWPYGLFLCK. A disulfide bond links C95 and C172. A helical membrane pass occupies residues 97 to 118; that stretch reads LIPSVIILNMFASVFLLTAISL. At 119–139 the chain is on the cytoplasmic side; sequence DRCLMVHKPIWCQNHRSVRTA. The helical transmembrane segment at 140 to 160 threads the bilayer; the sequence is FAVCGCVWVVTFVMCIPVFVY. Residues 161-329 are Extracellular-facing; it reads RDLLVVDDYS…TPQVAITISR (169 aa). Sulfotyrosine occurs at positions 174 and 184. The N-linked (GlcNAc...) asparagine glycan is linked to N201. A disordered region spans residues 233–252; the sequence is FHTSPEDPFSQDSASQQPHY. Residue Y308 is modified to Sulfotyrosine. The chain crosses the membrane as a helical span at residues 330–349; it reads LVVGFLVPFFIMITCYSLIV. The Cytoplasmic portion of the chain corresponds to 350-366; that stretch reads FRMRKTNLTKSRNKTLR. The chain crosses the membrane as a helical span at residues 367 to 389; it reads VAVAVVTVFFVCWIPYHIVGILL. Residues 390-406 lie on the Extracellular side of the membrane; that stretch reads VITDQESALREVVLPWD. The helical transmembrane segment at 407–427 threads the bilayer; the sequence is HMSIALASANSCFNPFLYALL. Residues 428-473 lie on the Cytoplasmic side of the membrane; that stretch reads GKDFRKKARQSVKGILEAAFSEELTHSTSCTQDKAPSKRNHMSTDV. A Phosphoserine modification is found at S448. The residue at position 452 (T452) is a Phosphothreonine.

It belongs to the G-protein coupled receptor 1 family. As to quaternary structure, interacts with VGF-derived peptide TLQP-21.

The protein resides in the cell membrane. Functionally, receptor for the chemotactic and inflammatory peptide anaphylatoxin C3a. This receptor stimulates chemotaxis, granule enzyme release and superoxide anion production. This Rattus norvegicus (Rat) protein is C3a anaphylatoxin chemotactic receptor (C3ar1).